Here is a 401-residue protein sequence, read N- to C-terminus: Exodeoxyribonuclease 7 large subunit (401 aa).

The protein belongs to the XseA family. In terms of assembly, heterooligomer composed of large and small subunits.

Its subcellular location is the cytoplasm. It catalyses the reaction Exonucleolytic cleavage in either 5'- to 3'- or 3'- to 5'-direction to yield nucleoside 5'-phosphates.. Its function is as follows. Bidirectionally degrades single-stranded DNA into large acid-insoluble oligonucleotides, which are then degraded further into small acid-soluble oligonucleotides. This chain is Exodeoxyribonuclease 7 large subunit, found in Clostridium botulinum (strain Langeland / NCTC 10281 / Type F).